The sequence spans 374 residues: Putative glutamate--cysteine ligase 2-2 (374 aa).

The protein belongs to the glutamate--cysteine ligase type 2 family. YbdK subfamily.

The enzyme catalyses L-cysteine + L-glutamate + ATP = gamma-L-glutamyl-L-cysteine + ADP + phosphate + H(+). Its function is as follows. ATP-dependent carboxylate-amine ligase which exhibits weak glutamate--cysteine ligase activity. In Rhodococcus jostii (strain RHA1), this protein is Putative glutamate--cysteine ligase 2-2.